The following is a 56-amino-acid chain: MAVQQNKKSRSKRGMRRSHDALSTAQLSVDATSGELHLRHNVTADGYYRGKKVINK.

Positions 1–26 are disordered; it reads MAVQQNKKSRSKRGMRRSHDALSTAQ. Basic residues predominate over residues 7–16; it reads KKSRSKRGMR.

Belongs to the bacterial ribosomal protein bL32 family.

The protein is Large ribosomal subunit protein bL32 of Shewanella amazonensis (strain ATCC BAA-1098 / SB2B).